A 550-amino-acid chain; its full sequence is Hydroxylamine reductase (550 aa).

Residues C3, C6, C18, and C25 each coordinate [2Fe-2S] cluster. Residues H249, E273, C317, C405, C433, C458, E492, and K494 each contribute to the hybrid [4Fe-2O-2S] cluster site. C405 carries the cysteine persulfide modification.

It belongs to the HCP family. [2Fe-2S] cluster serves as cofactor. Requires hybrid [4Fe-2O-2S] cluster as cofactor.

It is found in the cytoplasm. The enzyme catalyses A + NH4(+) + H2O = hydroxylamine + AH2 + H(+). Its function is as follows. Catalyzes the reduction of hydroxylamine to form NH(3) and H(2)O. This chain is Hydroxylamine reductase, found in Escherichia coli O17:K52:H18 (strain UMN026 / ExPEC).